A 266-amino-acid polypeptide reads, in one-letter code: Tryptophan synthase alpha chain (266 aa).

Residues Glu49 and Asp60 each act as proton acceptor in the active site.

The protein belongs to the TrpA family. Tetramer of two alpha and two beta chains.

The enzyme catalyses (1S,2R)-1-C-(indol-3-yl)glycerol 3-phosphate + L-serine = D-glyceraldehyde 3-phosphate + L-tryptophan + H2O. It functions in the pathway amino-acid biosynthesis; L-tryptophan biosynthesis; L-tryptophan from chorismate: step 5/5. In terms of biological role, the alpha subunit is responsible for the aldol cleavage of indoleglycerol phosphate to indole and glyceraldehyde 3-phosphate. This Synechococcus elongatus (strain ATCC 33912 / PCC 7942 / FACHB-805) (Anacystis nidulans R2) protein is Tryptophan synthase alpha chain.